The chain runs to 484 residues: Solute carrier family 40 member 1 (484 aa).

11 consecutive transmembrane segments (helical) span residues 58–78 (LLTAVYGVVEASAVAALGPIV), 94–114 (WLLLQGASFVAAGVSVTALLV), 123–143 (GFPAFVALVVVTNVSGALAAL), 189–209 (VLSGFFISFVSMEASAAALAA), 212–232 (LAAVWVQYWLFVSVYAGFPAL), 279–299 (VVLPGVALAFLYFTVLSFGTL), 308–328 (GIPAYVISLARGVSAAVGIAA), 346–366 (LWSIWAQWCCLLVCVASVWAG), 377–397 (LMGGVAASRLGLWMFDLAVMQ), 413–433 (GVQNSLQSMFDLLTYVMGIIV), and 442–462 (LIVLSFFLVTCAAAMYTMHVY).

This sequence belongs to the ferroportin (FP) (TC 2.A.100) family. SLC40A subfamily.

The protein localises to the membrane. May be involved in iron transport and iron homeostasis. This is Solute carrier family 40 member 1 from Oryza sativa subsp. japonica (Rice).